We begin with the raw amino-acid sequence, 713 residues long: Leucine-rich repeat-containing protein 4B (713 aa).

Residues 1 to 35 form the signal peptide; the sequence is MARARGSPCPPLPPGRMSWPHGALLFLWLFSPPLG. Over 36–576 the chain is Extracellular; it reads AGGGGVAVTS…DLDDVMKTTK (541 aa). The LRRNT domain occupies 48–86; sequence GGGSPPATSCPVACSCSNQASRVICTRRDLAEVPASIPV. LRR repeat units follow at residues 87 to 108, 111 to 132, 135 to 156, 159 to 180, 183 to 205, 208 to 229, 230 to 251, 254 to 275, and 278 to 299; these read NTRYLNLQENGIQVIRTDTFKH, HLEILQLSKNLVRKIEVGAFNG, SLNTLELFDNRLTTVPTQAFEY, KLRELWLRNNPIESIPSYAFNR, SLRRLDLGELKRLEYISEAAFEG, NLRYLNLGMCNLKDIPNLTALV, RLEELELSGNRLDLIRPGSFQG, SLRKLWLMHAQVATIERNAFDD, and SLEELNLSHNNLMSLPHDLFTP. N224 carries an N-linked (GlcNAc...) asparagine glycan. 8 N-linked (GlcNAc...) asparagine glycosylation sites follow: N283, N333, N374, N400, N422, N425, N444, and N452. The LRRCT domain maps to 311–363; sequence NPWHCNCDVLWLSWWLKETVPSNTTCCARCHAPAGLKGRYIGELDQSHFTCYA. Positions 364-452 constitute an Ig-like C2-type domain; the sequence is PVIVEPPTDL…GNTTASATLN (89 aa). A disulfide bridge connects residues C385 and C436. The interval 497–551 is disordered; the sequence is TQPGEEALQPRGTEKEPPGPTTDGVWGGGRPGDAAGPASSSTTAPAPRSSRPTEK. Residues 528-546 are compositionally biased toward low complexity; the sequence is GDAAGPASSSTTAPAPRSS. Residues 577–597 traverse the membrane as a helical segment; sequence IIIGCFVAITFMAAVMLVAFY. At 598 to 713 the chain is on the cytoplasmic side; it reads KLRKQHQLHK…SKENVQETQI (116 aa). A Phosphoserine modification is found at S693. Positions 694-713 are disordered; that stretch reads IHEPLLFKSGSKENVQETQI. A compositionally biased stretch (basic and acidic residues) spans 703 to 713; sequence GSKENVQETQI.

Interacts with PTPRF. Interacts with DLG4. N-glycosylated. O-glycosylated; contains sialic acid.

Its subcellular location is the membrane. It is found in the presynaptic cell membrane. Synaptic adhesion protein. Regulates the formation of excitatory synapses. The trans-synaptic adhesion between LRRC4B and PTPRF regulates the formation of excitatory synapses in a bidirectional manner. This is Leucine-rich repeat-containing protein 4B (LRRC4B) from Homo sapiens (Human).